Here is a 607-residue protein sequence, read N- to C-terminus: Phosphatidylinositol 4-kinase LSB6 (607 aa).

Over residues 73–88 the composition is skewed to polar residues; that stretch reads NVPSESPRPDQTSGSN. A disordered region spans residues 73–93; sequence NVPSESPRPDQTSGSNPAVGL. Residues 161–522 form the PI3K/PI4K catalytic domain; it reads GRELERIQTG…LVRRTRCQVI (362 aa). A G-loop region spans residues 167–173; that stretch reads IQTGSSG. The disordered stretch occupies residues 318–356; that stretch reads KSSGEDINHKPETTRNLTDETEPSKQINSSPISTESEEN. The span at 319–330 shows a compositional bias: basic and acidic residues; sequence SSGEDINHKPET. The segment covering 341–351 has biased composition (polar residues); sequence SKQINSSPIST. The catalytic loop stretch occupies residues 384 to 392; the sequence is RNTDRGLDN. An activation loop region spans residues 411–431; sequence AIDNGLSFPWKHPDEWRLYPY.

It belongs to the PI3/PI4-kinase family. In terms of assembly, interacts with LAS17. The cofactor is Mg(2+). Requires Mn(2+) as cofactor.

The protein localises to the cell membrane. It localises to the vacuole membrane. It carries out the reaction a 1,2-diacyl-sn-glycero-3-phospho-(1D-myo-inositol) + ATP = a 1,2-diacyl-sn-glycero-3-phospho-(1D-myo-inositol 4-phosphate) + ADP + H(+). Its function is as follows. May play a role in endocytic and/or exocytic pathways. This Saccharomyces cerevisiae (strain ATCC 204508 / S288c) (Baker's yeast) protein is Phosphatidylinositol 4-kinase LSB6 (LSB6).